Reading from the N-terminus, the 633-residue chain is 1-deoxy-D-xylulose-5-phosphate synthase (633 aa).

Residues H72 and 113-115 (GHS) contribute to the thiamine diphosphate site. D144 provides a ligand contact to Mg(2+). Thiamine diphosphate contacts are provided by residues 145–146 (GA), N173, Y284, and E367. Residue N173 coordinates Mg(2+).

It belongs to the transketolase family. DXPS subfamily. In terms of assembly, homodimer. The cofactor is Mg(2+). It depends on thiamine diphosphate as a cofactor.

The enzyme catalyses D-glyceraldehyde 3-phosphate + pyruvate + H(+) = 1-deoxy-D-xylulose 5-phosphate + CO2. It functions in the pathway metabolic intermediate biosynthesis; 1-deoxy-D-xylulose 5-phosphate biosynthesis; 1-deoxy-D-xylulose 5-phosphate from D-glyceraldehyde 3-phosphate and pyruvate: step 1/1. Its function is as follows. Catalyzes the acyloin condensation reaction between C atoms 2 and 3 of pyruvate and glyceraldehyde 3-phosphate to yield 1-deoxy-D-xylulose-5-phosphate (DXP). This is 1-deoxy-D-xylulose-5-phosphate synthase from Bacillus velezensis (strain DSM 23117 / BGSC 10A6 / LMG 26770 / FZB42) (Bacillus amyloliquefaciens subsp. plantarum).